Reading from the N-terminus, the 368-residue chain is DNA replication and repair protein RecF (368 aa).

Residue 30–37 participates in ATP binding; the sequence is GNNAQGKT.

Belongs to the RecF family.

The protein resides in the cytoplasm. The RecF protein is involved in DNA metabolism; it is required for DNA replication and normal SOS inducibility. RecF binds preferentially to single-stranded, linear DNA. It also seems to bind ATP. The chain is DNA replication and repair protein RecF from Streptococcus pyogenes serotype M6 (strain ATCC BAA-946 / MGAS10394).